Here is a 110-residue protein sequence, read N- to C-terminus: Acid stress chaperone HdeA (110 aa).

The signal sequence occupies residues 1–21 (MKKVLGVILGGLLLLPVVSNA). A disulfide bridge links C39 with C87.

This sequence belongs to the HdeA family.

Its subcellular location is the periplasm. In terms of biological role, required for optimal acid stress protection. Exhibits a chaperone-like activity only at low pH by suppressing non-specifically the aggregation of denaturated periplasmic proteins. The sequence is that of Acid stress chaperone HdeA from Escherichia coli O157:H7.